The primary structure comprises 79 residues: Acyl carrier protein (79 aa).

The region spanning 2–77 (ENIEQRVKKI…QAIDYVNAHL (76 aa)) is the Carrier domain. An O-(pantetheine 4'-phosphoryl)serine modification is found at Ser37.

The protein belongs to the acyl carrier protein (ACP) family. Post-translationally, 4'-phosphopantetheine is transferred from CoA to a specific serine of apo-ACP by AcpS. This modification is essential for activity because fatty acids are bound in thioester linkage to the sulfhydryl of the prosthetic group.

The protein localises to the cytoplasm. It participates in lipid metabolism; fatty acid biosynthesis. Functionally, carrier of the growing fatty acid chain in fatty acid biosynthesis. This Azoarcus sp. (strain BH72) protein is Acyl carrier protein.